A 567-amino-acid polypeptide reads, in one-letter code: Organic cation transporter-like protein (567 aa).

At 1–21 (MGYDEAIIHLGDFGRYQKIIY) the chain is on the cytoplasmic side. A helical transmembrane segment spans residues 22–42 (FLICLTSIPVAFHKLAGVFLL). Over 43–127 (AKPDFRCALP…TEWNLVCGRD (85 aa)) the chain is Extracellular. Residues asparagine 55, asparagine 67, asparagine 89, and asparagine 97 are each glycosylated (N-linked (GlcNAc...) asparagine). Residues 128–148 (FMAATSDSLFMLGVLLGSIVF) traverse the membrane as a helical segment. The Cytoplasmic segment spans residues 149-158 (GQLSDKYGRK). The chain crosses the membrane as a helical span at residues 159 to 179 (PILFASLVIQVLFGVLAGVAP). The Extracellular portion of the chain corresponds to 180 to 189 (EYFTYTFARL). Residues 190-210 (MVGATTSGVFLVAYVVAMEMV) form a helical membrane-spanning segment. Topologically, residues 211 to 219 (GPDKRLYAG) are cytoplasmic. The helical transmembrane segment at 220 to 240 (IFVMMFFSVGFMLTAVFAYFV) threads the bilayer. The Extracellular portion of the chain corresponds to 241-244 (HDWR). A helical transmembrane segment spans residues 245 to 265 (WLQIALTLPGLIFMFYYWIIP). Topologically, residues 266 to 343 (ESARWLLLKG…LFCYPNLRRK (78 aa)) are cytoplasmic. Residues 304 to 326 (LDEGENSEEKAKQKLEDQELDEG) are disordered. Over residues 310–320 (SEEKAKQKLED) the composition is skewed to basic and acidic residues. A helical transmembrane segment spans residues 344–364 (TLLIFLDWLVTSGVYYGLSWN). Residues 365-371 (TSNLGGN) lie on the Extracellular side of the membrane. The chain crosses the membrane as a helical span at residues 372–392 (VLLNFVISGAVEIPAYIFLLL). Over 393–400 (TLNRWGRR) the chain is Cytoplasmic. Residues 401–421 (SILCGCLVMAGLSLLATVIIP) form a helical membrane-spanning segment. Residues 422–427 (QRMHTL) lie on the Extracellular side of the membrane. The chain crosses the membrane as a helical span at residues 428-448 (IVACAMLGKLAITASYGTVYI). Residues 449 to 462 (FSAEQFPTVVRNVA) are Cytoplasmic-facing. A helical transmembrane segment spans residues 463 to 483 (LGAASMVARISGMMAPFLNFL). Residues 484-489 (ATIWKP) lie on the Extracellular side of the membrane. A helical membrane pass occupies residues 490-510 (LPLLICGSLTLVAGLLSLLLP). Topologically, residues 511–567 (ETHNKPMLETIADGERFGKKTKADVYLETGQELRAPEAQPLKGSGETNGSTIANGHK) are cytoplasmic. The tract at residues 546–567 (PEAQPLKGSGETNGSTIANGHK) is disordered. Over residues 555–567 (GETNGSTIANGHK) the composition is skewed to polar residues.

Belongs to the major facilitator (TC 2.A.1) superfamily. Organic cation transporter (TC 2.A.1.19) family.

It is found in the membrane. In terms of biological role, probably transports organic cations. In Drosophila melanogaster (Fruit fly), this protein is Organic cation transporter-like protein (Orct2).